Reading from the N-terminus, the 796-residue chain is Choline transporter-like 2 (796 aa).

A glycan (N-linked (GlcNAc...) asparagine) is linked at Asn-20. A helical transmembrane segment spans residues 35–55 (PCLLLFVLFLGGWAFIAQYAI). Residues Asn-209 and Asn-284 are each glycosylated (N-linked (GlcNAc...) asparagine). 4 consecutive transmembrane segments (helical) span residues 304–324 (WSIV…YIAL), 332–352 (ILWF…YFSV), 386–406 (LYLS…VIVL), and 431–451 (VFFP…AIGV). Asn-488 and Asn-520 each carry an N-linked (GlcNAc...) asparagine glycan. The next 5 helical transmembrane spans lie at 542–562 (VFGF…VLAS), 585–605 (FFQT…ILAI), 626–648 (AVTR…FLKF), 691–711 (FLFF…TYYF), and 724–744 (IAVP…VFFG).

Belongs to the CTL (choline transporter-like) family.

Its subcellular location is the membrane. This is Choline transporter-like 2 from Drosophila melanogaster (Fruit fly).